We begin with the raw amino-acid sequence, 505 residues long: Sucrose porin (505 aa).

The N-terminal stretch at 1–22 (MYRKSTLAMLIALLTSAASAHA) is a signal peptide. Positions 44-87 (ENRAQTAENRAGAAEKKVQQLTAQQQKNQNSTQEVAQRTARLEK) are disordered. Over residues 62–72 (QQLTAQQQKNQ) the composition is skewed to low complexity.

The protein belongs to the porin LamB (TC 1.B.3) family. In terms of assembly, homotrimer.

It localises to the cell outer membrane. Its function is as follows. Porin for sucrose uptake. This is Sucrose porin (scrY) from Salmonella typhimurium.